We begin with the raw amino-acid sequence, 269 residues long: Intercellular adhesion molecule 4 (269 aa).

The signal sequence occupies residues 1-20 (SLFPLSLLFFLAAAYPGVGS). Topologically, residues 21-238 (ALGRRTKRAQ…MLAWSSAPTA (218 aa)) are extracellular. Ig-like C2-type domains follow at residues 60 to 122 (GKSV…TRWA) and 144 to 215 (GRKY…LNLD). N-linked (GlcNAc...) asparagine glycosylation is found at asparagine 66, asparagine 76, asparagine 188, and asparagine 221. 4 disulfide bridges follow: cysteine 67-cysteine 111, cysteine 67-cysteine 115, cysteine 71-cysteine 115, and cysteine 151-cysteine 208. Residues 239–259 (LASVSIAALVGILLTVGAAYL) form a helical membrane-spanning segment. Residues 260-269 (CKCLAMKSQA) are Cytoplasmic-facing.

This sequence belongs to the immunoglobulin superfamily. ICAM family. In terms of processing, N- and O-glycosylated.

Its subcellular location is the cell membrane. ICAM proteins are ligands for the leukocyte adhesion protein LFA-1 (integrin alpha-L/beta-2). ICAM4 is also a ligand for alpha-4/beta-1 and alpha-V integrins. The chain is Intercellular adhesion molecule 4 (ICAM4) from Pan troglodytes (Chimpanzee).